A 492-amino-acid polypeptide reads, in one-letter code: Glutamyl-tRNA(Gln) amidotransferase subunit A (492 aa).

Active-site charge relay system residues include Lys79 and Ser154. The Acyl-ester intermediate role is filled by Ser178.

Belongs to the amidase family. GatA subfamily. As to quaternary structure, heterotrimer of A, B and C subunits.

It carries out the reaction L-glutamyl-tRNA(Gln) + L-glutamine + ATP + H2O = L-glutaminyl-tRNA(Gln) + L-glutamate + ADP + phosphate + H(+). In terms of biological role, allows the formation of correctly charged Gln-tRNA(Gln) through the transamidation of misacylated Glu-tRNA(Gln) in organisms which lack glutaminyl-tRNA synthetase. The reaction takes place in the presence of glutamine and ATP through an activated gamma-phospho-Glu-tRNA(Gln). The protein is Glutamyl-tRNA(Gln) amidotransferase subunit A of Desulforudis audaxviator (strain MP104C).